The chain runs to 170 residues: Cyclic pyranopterin monophosphate synthase (170 aa).

Residues 89–91 (LCH) and 125–126 (ME) each bind substrate. Asp140 is a catalytic residue.

The protein belongs to the MoaC family. Homohexamer; trimer of dimers.

It carries out the reaction (8S)-3',8-cyclo-7,8-dihydroguanosine 5'-triphosphate = cyclic pyranopterin phosphate + diphosphate. Its pathway is cofactor biosynthesis; molybdopterin biosynthesis. Functionally, catalyzes the conversion of (8S)-3',8-cyclo-7,8-dihydroguanosine 5'-triphosphate to cyclic pyranopterin monophosphate (cPMP). The chain is Cyclic pyranopterin monophosphate synthase from Streptomyces avermitilis (strain ATCC 31267 / DSM 46492 / JCM 5070 / NBRC 14893 / NCIMB 12804 / NRRL 8165 / MA-4680).